A 215-amino-acid chain; its full sequence is MANRGATRPNGPNTGNKICQFKLVLLGESAVGKSSLVLRFVKGQFHEFQESTIGAAFLTQTVCLDDTTVKFEIWDTAGQERYHSLAPMYYRGAQAAIVVYDITNEESFARAKNWVKELQRQASPNIVIALSGNKADLANKRAVDFQEAQSYADDNSLLFMETSAKTSMNVNEIFMAIAKKLPKNEPQNPGANSARGRGVDLTEPAQPARSQCCSN.

GTP contacts are provided by S29, A30, G32, K33, S34, S35, H46, E47, T52, and G78. A Mg(2+)-binding site is contributed by S34. 2 consecutive short sequence motifs (switch) follow at residues 44 to 56 (QFHE…IGAA) and 77 to 93 (AGQE…YRGA). T52 contacts Mg(2+). S84 bears the Phosphoserine mark. N133, K134, D136, A164, and K165 together coordinate GTP. Residues 181-215 (LPKNEPQNPGANSARGRGVDLTEPAQPARSQCCSN) form a disordered region. S-geranylgeranyl cysteine attachment occurs at residues C212 and C213.

Belongs to the small GTPase superfamily. Rab family. As to quaternary structure, interacts with GDI1; this promotes dissociation from membranes; phosphorylation at Ser-84 disrupts this interaction. Interacts with GDI2; phosphorylation at Ser-84 disrupts the interaction. Interacts with EEA1. Interacts with RIN1 and GAPVD1, which regulate its pathway, probably by acting as a GEF. Interacts with RINL. Interacts with ALS2CL, SUN2, ZFYVE20 and RUFY1. Interacts with RABEP1; one RABEP1 homodimer binds two RAB5A chains, but at opposite sides of the dimer. Interacts with SGSM1 and SGSM3. Interacts with PIK3CB. Interacts with OCRL and INPP5F. May be a component of a complex composed of RAB5A, DYN2 and PIK3C3. Does not interact with BLOC-3 complex (heterodimer of HPS1 and HPS4). Interacts with CLN5. Interacts with APPL2. Interacts with F8A1/F8A2/F8A3. Found in a complex with F8A1/F8A2/F8A3, HTT and RAB5A; mediates the recruitment of HTT by RAB5A onto early endosomes. Interacts with ATP9A. Interacts with PPP1R21; mediates the recruitment of FERRY complex by RAB5A onto early endosomes. Requires Mg(2+) as cofactor. In terms of processing, phosphorylation of Ser-84 in the switch II region by LRRK2 prevents the association of RAB regulatory proteins, including RAB GDP dissociation inhibitors GDI1 and GDI2.

The protein resides in the cell membrane. It is found in the early endosome membrane. It localises to the melanosome. The protein localises to the cytoplasmic vesicle. Its subcellular location is the cell projection. The protein resides in the ruffle. It is found in the membrane. It localises to the cytoplasm. The protein localises to the cytosol. Its subcellular location is the phagosome membrane. The protein resides in the endosome membrane. It carries out the reaction GTP + H2O = GDP + phosphate + H(+). Regulated by guanine nucleotide exchange factors (GEFs) including RINL, which promote the exchange of bound GDP for free GTP. Regulated by GTPase activating proteins (GAPs) which increase the GTP hydrolysis activity. Inhibited by GDP dissociation inhibitors (GDIs). In terms of biological role, the small GTPases Rab are key regulators of intracellular membrane trafficking, from the formation of transport vesicles to their fusion with membranes. Rabs cycle between an inactive GDP-bound form and an active GTP-bound form that is able to recruit to membranes different sets of downstream effectors directly responsible for vesicle formation, movement, tethering and fusion. RAB5A is required for the fusion of plasma membranes and early endosomes. Contributes to the regulation of filopodia extension. Required for the exosomal release of SDCBP, CD63, PDCD6IP and syndecan. Regulates maturation of apoptotic cell-containing phagosomes, probably downstream of DYN2 and PIK3C3. This is Ras-related protein Rab-5A from Mus musculus (Mouse).